A 67-amino-acid chain; its full sequence is MQVYGCCELVRELYAQIGSGDQGYIPQAISCAVKALNDIAADESLPKETREKAAFAAANLLISDFED.

It belongs to the UPF0253 family.

The protein is UPF0253 protein VV2574 of Vibrio vulnificus (strain YJ016).